Reading from the N-terminus, the 222-residue chain is Inositol diphosphatase DSP1 (222 aa).

A compositionally biased stretch (polar residues) spans 1–14 (MRQEATCSLVLTQD). Residues 1-41 (MRQEATCSLVLTQDAQHRKNQPPLAEEDDDRDHTDDAMPPP) form a disordered region. A Tyrosine-protein phosphatase domain is found at 68 to 222 (NFAMVDHGVY…LKHLPASFSC (155 aa)). The WPD loop important for active site topology stretch occupies residues 124–136 (FGIDGSKEPFVNI). 3 residues coordinate 1D-myo-inositol hexakisphosphate: Asn135, Ile136, and Arg140. Cys160 serves as the catalytic Phosphocysteine intermediate.

This sequence belongs to the protein-tyrosine phosphatase family. Atypical dual-specificity phosphatase Siw14-like subfamily.

The protein resides in the nucleus. It is found in the cytoplasm. The enzyme catalyses 5-diphospho-1D-myo-inositol 1,2,3,4,6-pentakisphosphate + H2O = 1D-myo-inositol hexakisphosphate + phosphate + H(+). It catalyses the reaction 1,5-bis(diphospho)-1D-myo-inositol 2,3,4,6-tetrakisphosphate + H2O = 1-diphospho-1D-myo-inositol 2,3,4,5,6-pentakisphosphate + phosphate + 2 H(+). The catalysed reaction is 3,5-bis(diphospho)-1D-myo-inositol 1,2,4,6-tetrakisphosphate + H2O = 3-diphospho-1D-myo-inositol 1,2,4,5,6-pentakisphosphate + phosphate + 2 H(+). It carries out the reaction 6-diphospho-1D-myo-inositol pentakisphosphate + H2O = 1D-myo-inositol hexakisphosphate + phosphate + H(+). In terms of biological role, cleaves the beta-phosphate at the 5-position of soluble inositol pyrophosphates. Has highest activity on 5-diphosphoinositol 1,2,3,4,6-pentakisphosphate (5-InsP(7)). Possesses phosphotyrosine phosphatase activity in vitro. May contribute to regulation of drought stress responses. In Oryza sativa subsp. japonica (Rice), this protein is Inositol diphosphatase DSP1.